We begin with the raw amino-acid sequence, 286 residues long: Structure-specific endonuclease subunit SLX1 (286 aa).

The GIY-YIG domain maps to 15–98 (SFYGVYILKS…QHAYQTRHIN (84 aa)).

The protein belongs to the SLX1 family. In terms of assembly, forms a heterodimer with SLX4. The cofactor is a divalent metal cation.

It is found in the nucleus. Functionally, catalytic subunit of the SLX1-SLX4 structure-specific endonuclease that resolves DNA secondary structures generated during DNA repair and recombination. Has endonuclease activity towards branched DNA substrates, introducing single-strand cuts in duplex DNA close to junctions with ss-DNA. In Candida dubliniensis (strain CD36 / ATCC MYA-646 / CBS 7987 / NCPF 3949 / NRRL Y-17841) (Yeast), this protein is Structure-specific endonuclease subunit SLX1.